The chain runs to 210 residues: Ovomucoid (210 aa).

The first 24 residues, methionine 1–glycine 24, serve as a signal peptide directing secretion. 3 consecutive Kazal-like domains span residues alanine 25–glutamate 88, threonine 89–lysine 153, and alanine 156–cysteine 210. Disulfide bonds link cysteine 29–cysteine 68, cysteine 46–cysteine 65, and cysteine 54–cysteine 86. An N-linked (GlcNAc...) asparagine glycan is attached at asparagine 34. 3 N-linked (GlcNAc...) asparagine glycosylation sites follow: asparagine 77, asparagine 93, and asparagine 99. Intrachain disulfides connect cysteine 94/cysteine 133, cysteine 111/cysteine 130, cysteine 119/cysteine 151, cysteine 162/cysteine 192, cysteine 170/cysteine 189, and cysteine 178/cysteine 210. An N-linked (GlcNAc...) asparagine; partial glycan is attached at asparagine 199.

The protein resides in the secreted. Serine protease inhibitor. Inhibits trypsin. This chain is Ovomucoid, found in Gallus gallus (Chicken).